A 122-amino-acid polypeptide reads, in one-letter code: Large ribosomal subunit protein bL12 (122 aa).

It belongs to the bacterial ribosomal protein bL12 family. As to quaternary structure, homodimer. Part of the ribosomal stalk of the 50S ribosomal subunit. Forms a multimeric L10(L12)X complex, where L10 forms an elongated spine to which 2 to 4 L12 dimers bind in a sequential fashion. Binds GTP-bound translation factors.

Its function is as follows. Forms part of the ribosomal stalk which helps the ribosome interact with GTP-bound translation factors. Is thus essential for accurate translation. The chain is Large ribosomal subunit protein bL12 from Vibrio campbellii (strain ATCC BAA-1116).